A 364-amino-acid polypeptide reads, in one-letter code: Glutamate 5-kinase (364 aa).

Lys-7 is a binding site for ATP. Ser-47, Asp-134, and Asn-146 together coordinate substrate. Residues 166-167 and 209-215 each bind ATP; these read TD and TGGIKTK. The PUA domain occupies 274–349; that stretch reads QGTLHVDDGA…NRIKSTQYPV (76 aa).

Belongs to the glutamate 5-kinase family.

The protein resides in the cytoplasm. The catalysed reaction is L-glutamate + ATP = L-glutamyl 5-phosphate + ADP. Its pathway is amino-acid biosynthesis; L-proline biosynthesis; L-glutamate 5-semialdehyde from L-glutamate: step 1/2. Functionally, catalyzes the transfer of a phosphate group to glutamate to form L-glutamate 5-phosphate. The protein is Glutamate 5-kinase of Prochlorococcus marinus (strain SARG / CCMP1375 / SS120).